The chain runs to 1340 residues: WASH complex subunit 2 (1340 aa).

Residues 1-219 (MNRTTPDQEL…VGSDRGSIVD (219 aa)) form a sufficient for interaction with WASHC3, WASHC4 and WASHC5; required for interaction with WASHC1 region. Ser157, Ser159, Ser204, Ser205, and Ser209 each carry phosphoserine. Residues 201 to 213 (GELSSEEGSVGSD) show a composition bias toward low complexity. The disordered stretch occupies residues 201–404 (GELSSEEGSV…SSSKPGKKIP (204 aa)). The span at 219-231 (DTEEEKEEEESDE) shows a compositional bias: acidic residues. A compositionally biased stretch (basic and acidic residues) spans 232–241 (DFAHHSDNDQ). Composition is skewed to acidic residues over residues 249–258 (SDEEEDDDGC) and 265–275 (EKEEEDIEDIE). Ser287 carries the post-translational modification Phosphoserine. A compositionally biased stretch (basic and acidic residues) spans 292–306 (LAARIKGDAVGRVDE). Thr330 bears the Phosphothreonine mark. Positions 354–365 (GSGGGLFSGGKG) are enriched in gly residues. The tract at residues 355–599 (SGGGLFSGGK…QTLSLQAQGE (245 aa)) is sufficient for interaction with CCDC93. An interaction with VPS35 region spans residues 356-1340 (GGGLFSGGKG…DDPLNAFGGQ (985 aa)). The LFa 1 motif lies at 366–377 (LFDDEDEESDLF). A phosphoserine mark is found at Ser394 and Ser396. 3 consecutive short sequence motifs (LFa) follow at residues 410–418 (VFLGDTDVF), 449–462 (LFDDDDGDDDDDFF), and 481–490 (IFGDDEGDLF). Disordered stretches follow at residues 421–586 (ASVP…GGTA), 618–663 (SSDE…KASL), and 695–838 (DSGG…STGV). A compositionally biased stretch (acidic residues) spans 450–461 (FDDDDGDDDDDF). Residues 506-516 (DENKARAEKKV) are compositionally biased toward basic and acidic residues. Residues 517–527 (SLPSSKNLKPS) are compositionally biased toward low complexity. 3 short sequence motifs (LFa) span residues 536-547 (LFSDEEDSEDLF), 571-582 (LFEDEDEEDNLF), and 616-628 (LFSSDEEDQWNIP). Residues Ser538 and Ser543 each carry the phosphoserine modification. Positions 546–566 (LFSSQSASKLKGAPLLPGKLP) are enriched in low complexity. Ser618 and Ser619 each carry phosphoserine. A compositionally biased stretch (basic and acidic residues) spans 636–646 (SDSRSKGESRD). 3 consecutive short sequence motifs (LFa) follow at residues 663 to 673 (LFEEDEEDDLF), 689 to 701 (LFEDDVDSGGSLF), and 725 to 737 (LFSDEEEKEAQLG). Phosphoserine occurs at positions 727, 751, 786, and 801. Over residues 740–767 (PVDKKVESAKESLKFGRTDVAESEKEGL) the composition is skewed to basic and acidic residues. The LFa 11 motif lies at 802-816 (LFDEEEDKMEDQNTI). A compositionally biased stretch (basic and acidic residues) spans 822–833 (EVGKGRDPDARP). Short sequence motifs (LFa) lie at residues 838–846 (VFQDEELLF) and 855–861 (DPDVDLF). Ser873 and Ser876 each carry phosphoserine. The LFa 14 motif lies at 877–887 (LFGDDEDDDLF). 2 disordered regions span residues 906–950 (DYSV…KEPS) and 987–1205 (FPSS…EDED). Over residues 916–930 (KHPETIQGIKEKGIW) the composition is skewed to basic and acidic residues. Residues 936 to 1340 (QDSSGLAPFK…DDPLNAFGGQ (405 aa)) are interaction with phospholipids. Residues 1027-1045 (NKSRVKMRGKRRPQTRAAR) are compositionally biased toward basic residues. The segment at 1028-1046 (KSRVKMRGKRRPQTRAARR) is required for interaction with F-actin-capping protein subunit alpha (CAPZA1 or CAPZA2 or CAPZA3). A phosphoserine mark is found at Ser1053 and Ser1086. Positions 1093-1109 (EALAAAAAPWEGGPVPG) are enriched in low complexity. Ser1113 carries the phosphoserine modification. 6 consecutive short sequence motifs (LFa) follow at residues 1128–1135 (LFDSGDIF), 1170–1184 (MFPALGEASSDDDLF), 1200–1208 (LLEDEDDLF), 1233–1239 (IFEDDIF), 1261–1269 (LFDDNIDIF), and 1289–1298 (IFDDDMDDIF). A phosphoserine mark is found at Ser1178 and Ser1179. The segment at 1301-1325 (GIQAKTAKPKSRSAQAAPEPRFEHK) is disordered. An LFa 21 motif is present at residues 1329 to 1337 (IFDDPLNAF).

Belongs to the FAM21 family. Component of the WASH core complex also described as WASH regulatory complex (SHRC) composed of WASHC1, WASHC2, WASHC3, WASHC4 and WASHC5; in the complex interacts (via N-terminus) directly with WASHC1. The WASH core complex associates with the F-actin-capping protein dimer (formed by CAPZA1, CAPZA2 or CAPZA3 and CAPZB) in a transient or substoichiometric manner which was initially described as WASH complex. Interacts with VPS35; mediates the association with the retromer CSC complex. Interacts with FKBP15. Interacts with CCDC93, CCDC22, VPS35L; indicative for an association of the WASH core complex with the CCC and retriever complexes. Directly interacts with TBC1D23.

The protein resides in the early endosome membrane. It localises to the cell membrane. Acts as a component of the WASH core complex that functions as a nucleation-promoting factor (NPF) at the surface of endosomes, where it recruits and activates the Arp2/3 complex to induce actin polymerization, playing a key role in the fission of tubules that serve as transport intermediates during endosome sorting. Mediates the recruitment of the WASH core complex to endosome membranes via binding to phospholipids and VPS35 of the retromer CSC. Mediates the recruitment of the F-actin-capping protein dimer to the WASH core complex probably promoting localized F-actin polymerization needed for vesicle scission. Via its C-terminus binds various phospholipids, most strongly phosphatidylinositol 4-phosphate (PtdIns-(4)P), phosphatidylinositol 5-phosphate (PtdIns-(5)P) and phosphatidylinositol 3,5-bisphosphate (PtdIns-(3,5)P2). Involved in the endosome-to-plasma membrane trafficking and recycling of SNX27-retromer-dependent cargo proteins, such as GLUT1. Required for the association of DNAJC13, ENTR1, ANKRD50 with retromer CSC subunit VPS35. Required for the endosomal recruitment of CCC and retriever complexes subunits COMMD1 and CCDC93 as well as the retrievere complex subunit VPS35L. In Pongo abelii (Sumatran orangutan), this protein is WASH complex subunit 2.